Consider the following 457-residue polypeptide: tRNA-2-methylthio-N(6)-dimethylallyladenosine synthase (457 aa).

An MTTase N-terminal domain is found at 2–119 (KKVFIKTFGC…LPELIDARRR (118 aa)). The [4Fe-4S] cluster site is built by cysteine 11, cysteine 48, cysteine 82, cysteine 156, cysteine 160, and cysteine 163. One can recognise a Radical SAM core domain in the interval 142–375 (RVEGPSAFVS…QATIDANMAR (234 aa)). Residues 378 to 448 (EGMVGSVQRI…PHSLRGDVVE (71 aa)) form the TRAM domain.

This sequence belongs to the methylthiotransferase family. MiaB subfamily. As to quaternary structure, monomer. [4Fe-4S] cluster is required as a cofactor.

The protein resides in the cytoplasm. The enzyme catalyses N(6)-dimethylallyladenosine(37) in tRNA + (sulfur carrier)-SH + AH2 + 2 S-adenosyl-L-methionine = 2-methylsulfanyl-N(6)-dimethylallyladenosine(37) in tRNA + (sulfur carrier)-H + 5'-deoxyadenosine + L-methionine + A + S-adenosyl-L-homocysteine + 2 H(+). Catalyzes the methylthiolation of N6-(dimethylallyl)adenosine (i(6)A), leading to the formation of 2-methylthio-N6-(dimethylallyl)adenosine (ms(2)i(6)A) at position 37 in tRNAs that read codons beginning with uridine. The protein is tRNA-2-methylthio-N(6)-dimethylallyladenosine synthase of Ralstonia nicotianae (strain ATCC BAA-1114 / GMI1000) (Ralstonia solanacearum).